The chain runs to 211 residues: FMN-dependent NADH:quinone oxidoreductase 2 (211 aa).

102 to 105 (MWNF) lines the FMN pocket.

It belongs to the azoreductase type 1 family. Homodimer. It depends on FMN as a cofactor.

The enzyme catalyses 2 a quinone + NADH + H(+) = 2 a 1,4-benzosemiquinone + NAD(+). It carries out the reaction N,N-dimethyl-1,4-phenylenediamine + anthranilate + 2 NAD(+) = 2-(4-dimethylaminophenyl)diazenylbenzoate + 2 NADH + 2 H(+). Quinone reductase that provides resistance to thiol-specific stress caused by electrophilic quinones. In terms of biological role, also exhibits azoreductase activity. Catalyzes the reductive cleavage of the azo bond in aromatic azo compounds to the corresponding amines. The protein is FMN-dependent NADH:quinone oxidoreductase 2 of Bacillus cereus (strain ATCC 14579 / DSM 31 / CCUG 7414 / JCM 2152 / NBRC 15305 / NCIMB 9373 / NCTC 2599 / NRRL B-3711).